Reading from the N-terminus, the 961-residue chain is E3 ubiquitin-protein ligase TRIM37 (961 aa).

The residue at position 1 (Met1) is an N-acetylmethionine. Residues 15-55 form an RING-type; degenerate zinc finger; the sequence is CFICMEKLRDARLCPHCSKLCCFSCIRRWLTEQRAQCPHCR. Residues 90 to 132 form a B box-type zinc finger; that stretch reads NEKDKCENHHEKLSVFCWTCKKCICHQCALWGGMHGGHTFKPL. Residues Cys95, His98, Cys117, and His124 each coordinate Zn(2+). Residues 132 to 234 are a coiled coil; sequence LAEIYEQHVT…VEHQLRSCSK (103 aa). Residues 276–403 enclose the MATH domain; sequence YDSATFVLEN…NDTVILRFQV (128 aa). The stretch at 419–450 forms a coiled coil; that stretch reads ITQLEAAQTGYIQQINNLKERLTIELSRTQKS. 5 disordered regions span residues 447–514, 529–561, 645–665, 776–811, and 874–961; these read TQKS…HHEL, VNHLDGSSSSASSTATSNTEENDIDEETMSGEN, SLLQPTASYSRKDKDQRKQQA, AVDSGENSRSKGDCQVLAEGSSGSSQSGSRHSSPRA, and LESH…GGGR. Phosphoserine is present on Ser454. The span at 504–514 shows a compositional bias: basic and acidic residues; it reads KIQNEDYHHEL. The segment covering 535-545 has biased composition (low complexity); the sequence is SSSSASSTATS. Over residues 548 to 561 the composition is skewed to acidic residues; that stretch reads EENDIDEETMSGEN. Residues 776–787 show a composition bias toward basic and acidic residues; sequence AVDSGENSRSKG. Low complexity predominate over residues 795–806; it reads GSSGSSQSGSRH. Over residues 903–915 the composition is skewed to acidic residues; it reads SDIECDTENEEQE.

It belongs to the TRIM/RBCC family. As to quaternary structure, associates with the PRC2/EED-EZH2 complex. Post-translationally, auto-ubiquitinated. Highly expressed in testis and brain. In embryonic tissues, expressed in epithelia, including ducts of the developing pancreas, epithelium of the midgut and nasal epithelium. In adult, detected in the central and peripheral nervous systems, including enteric ganglia, retina and the adrenal medulla (at protein level).

Its subcellular location is the chromosome. The protein localises to the cytoplasm. It localises to the perinuclear region. The protein resides in the peroxisome membrane. It carries out the reaction S-ubiquitinyl-[E2 ubiquitin-conjugating enzyme]-L-cysteine + [acceptor protein]-L-lysine = [E2 ubiquitin-conjugating enzyme]-L-cysteine + N(6)-ubiquitinyl-[acceptor protein]-L-lysine.. It participates in protein modification; protein ubiquitination. E3 ubiquitin-protein ligase required to prevent centriole reduplication. Probably acts by ubiquitinating positive regulators of centriole reduplication. Mediates monoubiquitination of 'Lys-119' of histone H2A (H2AK119Ub), a specific tag for epigenetic transcriptional repression: associates with some Polycomb group (PcG) multiprotein PRC2-like complex and mediates repression of target genes. Also acts as a positive regulator of peroxisome import by mediating monoubiquitination of PEX5 at 'Lys-472': monoubiquitination promotes PEX5 stabilitation by preventing its polyubiquitination and degradation by the proteasome. The polypeptide is E3 ubiquitin-protein ligase TRIM37 (Mus musculus (Mouse)).